The following is a 197-amino-acid chain: Probable host range protein 2 (197 aa).

The interval 172–197 is disordered; it reads DHDDNDNADDDEEDDDEVNDIEDDYE. Over residues 174-197 the composition is skewed to acidic residues; that stretch reads DDNDNADDDEEDDDEVNDIEDDYE.

It belongs to the poxviridae C7 protein family.

This Ovis aries (Sheep) protein is Probable host range protein 2.